Consider the following 348-residue polypeptide: MKLTVFSAKPYDIEYLGGIATNQNSSPAIEINFLHVPLSSETAAFANGADAVCVFVHDVLDANVLRELYAAGVRAILFRCSGYNNIDLREAERLGFFVANVPSYSPEAVAEFAVALIQTLNRKTHRAYNRVRDGNFNLDGLLGRTLHGKTVGIVGSGRIGLAMAQIVQGFGCKLLAYDPRPTEAFKKYGEYVDLDTLLSQCDIVSLHCPLMDSTQHIINDTTVSKMKRGAMLVNTSRGGLIDTQSVMKALKSKRLGGLALDVYEGERALFYKDHSGDIIHDDLLMRLTTFHNVVVSGHQAYFTEEALTEIAECTLRNLDDWAKGVPTANALVQGRNSNGRRERGLARL.

Residues 158-159 (RI), Asp178, 208-209 (CP), 235-237 (TSR), and Asp261 each bind NAD(+). Arg237 is an active-site residue. Residue Glu266 is part of the active site. The active-site Proton donor is His298.

It belongs to the D-isomer specific 2-hydroxyacid dehydrogenase family.

The protein operates within secondary metabolite biosynthesis. D-lactate dehydrogenase; part of the gene cluster that mediates the biosynthesis of KK-1, a novel cyclic depsipeptide with 10 residues which is a promising active compound with high activity against many plant pathogens, especially Botrytis cinerea. Within the pathway, kk1H catalyzes in the synthesis of D-lactic acid from pyruvic acid, which is recognized by the A domain of the first kk1B module. The nonribosomal peptide synthetase (NRPS) kk1B catalyzes the elongation and cyclization of the decapeptide chain composed of 1 D-lactic acid residue (D-Lac), 1 pipecolic acid residue (Pip), 1 aspartic acid residue (Asp), 1 isoleucine residue (Ile), 1 glycine residue (Gly), 1 tyrosine residue (Tyr) and 4 valine residues (Val). The Asp, Ile and 3 Val residues are N-methylated by the 5 methyltransferase domains from the NRPS (found in modules 3, 5, 6, 7 and 9), whereas the Tyr residue is O-methylated by the cluster encoded O-methyltransferase kk1A. The thioesterase kk1J is likely to be involved in the corrective mechanism of peptide chain synthesis. The D-lactate dehydrogenase kk1H is involved in the synthesis of D-lactic acid from pyruvic acid, which is recognized by the A domain of the first kk1B module. The pyrroline-5-carboxylate reductase kk1I is involved in the synthesis of the L-pipecolic acid residue of KK-1 from delta-1-pyrroline-5-carboxylate (P5C), a metabolic intermediate of lysine. It still is unclear how kk1C and kk1D are involved in the production of KK-1. In Curvularia clavata, this protein is D-lactate dehydrogenase kk1H.